A 453-amino-acid polypeptide reads, in one-letter code: Homogentisate 1,2-dioxygenase (453 aa).

Residue histidine 306 is the Proton acceptor of the active site. Residues histidine 349 and glutamate 355 each contribute to the Fe cation site. Positions 364 and 385 each coordinate homogentisate. Fe cation is bound at residue histidine 385.

The protein belongs to the homogentisate dioxygenase family. In terms of assembly, hexamer; dimer of trimers. Requires Fe cation as cofactor.

The enzyme catalyses homogentisate + O2 = 4-maleylacetoacetate + H(+). It participates in amino-acid degradation; L-phenylalanine degradation; acetoacetate and fumarate from L-phenylalanine: step 4/6. Functionally, involved in the catabolism of homogentisate (2,5-dihydroxyphenylacetate or 2,5-OH-PhAc), a central intermediate in the degradation of phenylalanine and tyrosine. Catalyzes the oxidative ring cleavage of the aromatic ring of homogentisate to yield maleylacetoacetate. The polypeptide is Homogentisate 1,2-dioxygenase (Rhizobium leguminosarum bv. trifolii (strain WSM2304)).